The following is a 210-amino-acid chain: Endo-1,4-beta-xylanase A (210 aa).

Residues 1–19 (MKLKKKMLTLLLTASMSFG) form the signal peptide. Residues 20–210 (LFGATSSAAT…SSGRSNVTVW (191 aa)) enclose the GH11 domain. The active-site Nucleophile is glutamate 104. Catalysis depends on glutamate 197, which acts as the Proton donor.

It belongs to the glycosyl hydrolase 11 (cellulase G) family.

The enzyme catalyses Endohydrolysis of (1-&gt;4)-beta-D-xylosidic linkages in xylans.. The protein operates within glycan degradation; xylan degradation. The polypeptide is Endo-1,4-beta-xylanase A (xynA) (Geobacillus stearothermophilus (Bacillus stearothermophilus)).